Here is a 258-residue protein sequence, read N- to C-terminus: 5'-nucleotidase SurE (258 aa).

4 residues coordinate a divalent metal cation: aspartate 13, aspartate 14, serine 44, and asparagine 92. Residues 237 to 258 (SPLTAPHSTEHHDALDGIATEF) are disordered.

The protein belongs to the SurE nucleotidase family. It depends on a divalent metal cation as a cofactor.

It is found in the cytoplasm. It carries out the reaction a ribonucleoside 5'-phosphate + H2O = a ribonucleoside + phosphate. Its function is as follows. Nucleotidase that shows phosphatase activity on nucleoside 5'-monophosphates. The chain is 5'-nucleotidase SurE from Halobacterium salinarum (strain ATCC 29341 / DSM 671 / R1).